An 825-amino-acid polypeptide reads, in one-letter code: Breast cancer anti-estrogen resistance protein 3 homolog (825 aa).

Ala2 is subject to N-acetylalanine. Ser32, Ser78, Ser83, Ser182, and Ser290 each carry phosphoserine. The disordered stretch occupies residues 40–84; the sequence is EAYPDVSIHGTLPRKKKGPPPIRSCDSASHMGTLPHSKSPRQSSP. The SH2 domain occupies 154-253; it reads WYHGRIPRQV…QSGAIIFQPI (100 aa). Positions 300–320 are disordered; the sequence is DHSLPRGNLLRNKDKSGSQPA. Lys334 carries the post-translational modification N6-methyllysine. Ser358, Ser363, and Ser375 each carry phosphoserine. Position 442 is an omega-N-methylarginine (Arg442). Ser471 carries the phosphoserine modification. The Ras-GEF domain maps to 548–818; sequence DARVIAQHML…TALSRKLEPP (271 aa). The mediates the interaction with BCAR1/p130CAS stretch occupies residues 744 to 748; it reads LATAR.

Part of a complex comprised of PTPRA, BCAR1, BCAR3 and SRC; the formation of the complex is dependent on integrin mediated-tyrosine phosphorylation of PTPRA. Within the complex, interacts (via SH2 domain) with PTPRA (when phosphorylated on 'Tyr-792'). Interacts (via Ras-GEF domain) with BCAR1. Interacts (via Ras-GEF domain) with NEDD9. Interacts with PTK2/FAK1. Interacts with PTPN1. Interacts (via SH2 domain) with EGFR (when tyrosine-phosphorylated). Phosphorylated on tyrosine residues.

Its subcellular location is the cytoplasm. It localises to the cell junction. The protein localises to the focal adhesion. Its function is as follows. Acts as an adapter protein downstream of several growth factor receptors to promote cell proliferation, migration, and redistribution of actin fibers. Specifically involved in INS/insulin signaling pathway by mediating MAPK1/ERK2-MAPK3/ERK1 activation and DNA synthesis. Promotes insulin-mediated membrane ruffling. In response to vasoconstrictor peptide EDN1, involved in the activation of RAP1 downstream of PTK2B via interaction with phosphorylated BCAR1. Inhibits cell migration and invasion via regulation of TGFB-mediated matrix digestion, actin filament rearrangement, and inhibition of invadopodia activity. May inhibit TGFB/SMAD signaling, via facilitating BCAR1 and SMAD2 and/or SMAD3 interaction. Regulates EGF-induced DNA synthesis. Required for the maintenance of ocular lens morphology and structural integrity, potentially via regulation of focal adhesion complex signaling. Acts upstream of PTPRA to regulate the localization of BCAR1 and PTPRA to focal adhesions, via regulation of SRC-mediated phosphorylation of PTPRA. Positively regulates integrin-induced tyrosine phosphorylation of BCAR1. Acts as a guanine nucleotide exchange factor (GEF) for small GTPases RALA, RAP1A and RRAS. However, in a contrasting study, lacks GEF activity towards RAP1. In Rattus norvegicus (Rat), this protein is Breast cancer anti-estrogen resistance protein 3 homolog.